The primary structure comprises 101 residues: Large ribosomal subunit protein uL23 (101 aa).

This sequence belongs to the universal ribosomal protein uL23 family. Part of the 50S ribosomal subunit. Contacts protein L29, and trigger factor when it is bound to the ribosome.

In terms of biological role, one of the early assembly proteins it binds 23S rRNA. One of the proteins that surrounds the polypeptide exit tunnel on the outside of the ribosome. Forms the main docking site for trigger factor binding to the ribosome. The polypeptide is Large ribosomal subunit protein uL23 (Corynebacterium jeikeium (strain K411)).